We begin with the raw amino-acid sequence, 1059 residues long: Endo-1,4-beta-xylanase A (1059 aa).

Positions 1-30 (MQVRKRRGLLDVSTAVLVGILAGFLGVVLA) are cleaved as a signal peptide. The segment at 47–199 (SSLETVLALS…LDKVQVLAPK (153 aa)) is A-1. An A-2 region spans residues 200–354 (ESGPKVIYET…DDVKIVDTTS (155 aa)). In terms of domain architecture, GH10 spans 364–692 (EKEIPALKEV…KLAYWAIVAP (329 aa)). The active-site Proton donor is glutamate 502. Residue glutamate 608 is the Nucleophile of the active site. CBM-cenC domains follow at residues 700–870 (KESR…LEGI) and 871–1059 (MVAT…RLIK).

It belongs to the glycosyl hydrolase 10 (cellulase F) family.

It carries out the reaction Endohydrolysis of (1-&gt;4)-beta-D-xylosidic linkages in xylans.. The protein is Endo-1,4-beta-xylanase A (xynA) of Thermotoga maritima (strain ATCC 43589 / DSM 3109 / JCM 10099 / NBRC 100826 / MSB8).